The primary structure comprises 1960 residues: Myosin-9 (1960 aa).

An N-acetylalanine modification is found at alanine 2. Residues 2-838 form a mediates interaction with LIMCH1 region; the sequence is AQQAADKYLY…RLFTKVKPLL (837 aa). Lysine 8 carries the post-translational modification N6-acetyllysine. Tyrosine 11 is subject to Phosphotyrosine. The 51-residue stretch at 27 to 77 folds into the Myosin N-terminal SH3-like domain; the sequence is AAKKLVWVPSDKSGFEPASLKEEVGEEAIVELVENGKKVKVNKDDIQKMNP. Residues 81–776 enclose the Myosin motor domain; it reads SKVEDMAELT…VLAHLEEERD (696 aa). At lysine 102 the chain carries N6-acetyllysine. Residue 174–181 coordinates ATP; the sequence is GESGAGKT. Residues lysine 299, lysine 435, and lysine 613 each carry the N6-acetyllysine modification. A Phosphoserine modification is found at serine 628. An actin-binding region spans residues 654–676; sequence LAKLMATLRNTNPNFVRCIIPNH. Tyrosine 754 carries the post-translational modification Phosphotyrosine. Residues 779–808 form the IQ domain; it reads ITDVIIGFQACCRGYLARKAFAKRQQQLTA. Residues 837 to 1926 are a coiled coil; it reads LLQVSRQEEE…LKNKLRRGDL (1090 aa). Lysine 850 is subject to N6-succinyllysine. N6-acetyllysine occurs at positions 860, 975, and 1024. Residue serine 1114 is modified to Phosphoserine. A disordered region spans residues 1117–1137; it reads QEDLESERASRNKAEKQKRDL. Over residues 1122-1137 the composition is skewed to basic and acidic residues; the sequence is SERASRNKAEKQKRDL. Residues lysine 1234, lysine 1249, lysine 1357, lysine 1392, lysine 1404, lysine 1410, lysine 1459, and lysine 1638 each carry the N6-acetyllysine modification. Lysine 1669 is modified (N6-succinyllysine). Phosphoserine is present on serine 1714. 3 positions are modified to N6-acetyllysine: lysine 1793, lysine 1802, and lysine 1845. The disordered stretch occupies residues 1877 to 1918; the sequence is RQLEEAEEEAQRANASRRKLQRELEDATETADAMNREVSSLK. Arginine 1923 carries the post-translational modification Omega-N-methylarginine. A disordered region spans residues 1934-1960; the sequence is VARKGAGDCSDEEVDGKADGAEAKAAE. Serine 1943 bears the Phosphoserine mark. A compositionally biased stretch (basic and acidic residues) spans 1948–1960; sequence DGKADGAEAKAAE.

Belongs to the TRAFAC class myosin-kinesin ATPase superfamily. Myosin family. As to quaternary structure, myosin is a hexameric protein that consists of 2 heavy chain subunits (MHC), 2 alkali light chain subunits (MLC) and 2 regulatory light chain subunits (MLC-2). Interacts with RASIP1. Interacts with DDR1. Interacts with PDLIM2. Interacts with SVIL. Interacts with HTRA3. Interacts with Myo7a. Interacts with CFAP95. Interacts with LIMCH1; independently of the integration of MYH9 into the myosin complex. Interacts with RAB3A. Interacts with ZBED4. Interacts with S100A4; this interaction increases cell motility. Post-translationally, ISGylated. In terms of processing, ubiquitination.

It localises to the cytoplasm. The protein localises to the cytoskeleton. It is found in the cell cortex. Its subcellular location is the cytoplasmic vesicle. The protein resides in the secretory vesicle. It localises to the cortical granule. Its function is as follows. Cellular myosin that appears to play a role in cytokinesis, cell shape, and specialized functions such as secretion and capping. Required for cortical actin clearance prior to oocyte exocytosis. Promotes cell motility in conjunction with S100A4. During cell spreading, plays an important role in cytoskeleton reorganization, focal contact formation (in the margins but not the central part of spreading cells), and lamellipodial retraction; this function is mechanically antagonized by MYH10. This chain is Myosin-9 (MYH9), found in Canis lupus familiaris (Dog).